Consider the following 306-residue polypeptide: Mycothiol acetyltransferase (306 aa).

2 N-acetyltransferase domains span residues 17 to 163 and 166 to 306; these read VARV…RPMP and LALS…YRRA. 1D-myo-inositol 2-(L-cysteinylamino)-2-deoxy-alpha-D-glucopyranoside is bound at residue Glu48. Acetyl-CoA is bound at residue 89–91; the sequence is IVV. Residues Glu192, Lys232, and Glu239 each contribute to the 1D-myo-inositol 2-(L-cysteinylamino)-2-deoxy-alpha-D-glucopyranoside site. Residues 243–245 and 250–256 contribute to the acetyl-CoA site; these read LGV and AARGLGS. A 1D-myo-inositol 2-(L-cysteinylamino)-2-deoxy-alpha-D-glucopyranoside-binding site is contributed by Tyr277.

It belongs to the acetyltransferase family. MshD subfamily. In terms of assembly, monomer.

It carries out the reaction 1D-myo-inositol 2-(L-cysteinylamino)-2-deoxy-alpha-D-glucopyranoside + acetyl-CoA = mycothiol + CoA + H(+). In terms of biological role, catalyzes the transfer of acetyl from acetyl-CoA to desacetylmycothiol (Cys-GlcN-Ins) to form mycothiol. This chain is Mycothiol acetyltransferase, found in Clavibacter michiganensis subsp. michiganensis (strain NCPPB 382).